The sequence spans 426 residues: UDP-N-acetylglucosamine 1-carboxyvinyltransferase 2 (426 aa).

22–23 provides a ligand contact to phosphoenolpyruvate; it reads KN. Residue arginine 92 coordinates UDP-N-acetyl-alpha-D-glucosamine. The active-site Proton donor is aspartate 116. UDP-N-acetyl-alpha-D-glucosamine contacts are provided by residues 121 to 125, aspartate 307, and isoleucine 329; that span reads RPIDQ.

Belongs to the EPSP synthase family. MurA subfamily.

Its subcellular location is the cytoplasm. It catalyses the reaction phosphoenolpyruvate + UDP-N-acetyl-alpha-D-glucosamine = UDP-N-acetyl-3-O-(1-carboxyvinyl)-alpha-D-glucosamine + phosphate. It functions in the pathway cell wall biogenesis; peptidoglycan biosynthesis. In terms of biological role, cell wall formation. Adds enolpyruvyl to UDP-N-acetylglucosamine. In Lactiplantibacillus plantarum (strain ATCC BAA-793 / NCIMB 8826 / WCFS1) (Lactobacillus plantarum), this protein is UDP-N-acetylglucosamine 1-carboxyvinyltransferase 2.